The chain runs to 278 residues: Tryptophan synthase alpha chain (278 aa).

Active-site proton acceptor residues include glutamate 50 and aspartate 61.

Belongs to the TrpA family. Tetramer of two alpha and two beta chains.

It catalyses the reaction (1S,2R)-1-C-(indol-3-yl)glycerol 3-phosphate + L-serine = D-glyceraldehyde 3-phosphate + L-tryptophan + H2O. It functions in the pathway amino-acid biosynthesis; L-tryptophan biosynthesis; L-tryptophan from chorismate: step 5/5. Functionally, the alpha subunit is responsible for the aldol cleavage of indoleglycerol phosphate to indole and glyceraldehyde 3-phosphate. This is Tryptophan synthase alpha chain from Nitrobacter hamburgensis (strain DSM 10229 / NCIMB 13809 / X14).